Here is a 443-residue protein sequence, read N- to C-terminus: Tubulin beta chain (443 aa).

Positions 11, 69, 138, 142, 143, 144, 204, and 226 each coordinate GTP. E69 lines the Mg(2+) pocket. Positions 424-443 are disordered; the sequence is QYQDASAEEEGEFEGEEEEA. The segment covering 429–443 has biased composition (acidic residues); it reads SAEEEGEFEGEEEEA.

Belongs to the tubulin family. Dimer of alpha and beta chains. A typical microtubule is a hollow water-filled tube with an outer diameter of 25 nm and an inner diameter of 15 nM. Alpha-beta heterodimers associate head-to-tail to form protofilaments running lengthwise along the microtubule wall with the beta-tubulin subunit facing the microtubule plus end conferring a structural polarity. Microtubules usually have 13 protofilaments but different protofilament numbers can be found in some organisms and specialized cells. Mg(2+) serves as cofactor.

It localises to the cytoplasm. It is found in the cytoskeleton. Functionally, tubulin is the major constituent of microtubules, a cylinder consisting of laterally associated linear protofilaments composed of alpha- and beta-tubulin heterodimers. Microtubules grow by the addition of GTP-tubulin dimers to the microtubule end, where a stabilizing cap forms. Below the cap, tubulin dimers are in GDP-bound state, owing to GTPase activity of alpha-tubulin. This is Tubulin beta chain (TUBB) from Chlamydomonas incerta.